Here is a 159-residue protein sequence, read N- to C-terminus: Large ribosomal subunit protein uL10 (159 aa).

This sequence belongs to the universal ribosomal protein uL10 family. As to quaternary structure, part of the ribosomal stalk of the 50S ribosomal subunit. The N-terminus interacts with L11 and the large rRNA to form the base of the stalk. The C-terminus forms an elongated spine to which L12 dimers bind in a sequential fashion forming a multimeric L10(L12)X complex.

Forms part of the ribosomal stalk, playing a central role in the interaction of the ribosome with GTP-bound translation factors. The protein is Large ribosomal subunit protein uL10 (rplJ) of Campylobacter jejuni subsp. jejuni serotype O:2 (strain ATCC 700819 / NCTC 11168).